The following is a 92-amino-acid chain: Acylphosphatase (92 aa).

Residues R6–R92 enclose the Acylphosphatase-like domain. Residues R21 and N39 contribute to the active site.

Belongs to the acylphosphatase family.

It catalyses the reaction an acyl phosphate + H2O = a carboxylate + phosphate + H(+). In Natronomonas pharaonis (strain ATCC 35678 / DSM 2160 / CIP 103997 / JCM 8858 / NBRC 14720 / NCIMB 2260 / Gabara) (Halobacterium pharaonis), this protein is Acylphosphatase (acyP).